The following is a 761-amino-acid chain: RNA-binding protein 12B (761 aa).

Residues Ser-98, Ser-101, and Ser-112 each carry the phosphoserine modification. Lys-114 is covalently cross-linked (Glycyl lysine isopeptide (Lys-Gly) (interchain with G-Cter in SUMO2)). The interval 120–147 is disordered; the sequence is SGYGSSINQDAGFHSNGTGHGNLRPRKT. Residue Lys-151 forms a Glycyl lysine isopeptide (Lys-Gly) (interchain with G-Cter in SUMO2) linkage. Positions 155-230 constitute an RRM 1 domain; sequence PYLFLRGLPY…RFIEVMQGSE (76 aa). Positions 247–262 are enriched in basic and acidic residues; sequence LRRSEEHSPPRGINDR. The disordered stretch occupies residues 247 to 278; sequence LRRSEEHSPPRGINDRHFRKRSHSKSPRRTRS. Residues Ser-250 and Ser-254 each carry the phosphoserine modification. Basic residues predominate over residues 263–278; the sequence is HFRKRSHSKSPRRTRS. Thr-276 is modified (phosphothreonine). Phosphoserine is present on residues Ser-278, Ser-280, Ser-292, and Ser-294. In terms of domain architecture, RRM 2 spans 284-360; that stretch reads FYVHLKNLSL…RPVHIDPISR (77 aa). The residue at position 319 (Lys-319) is an N6-acetyllysine. Lys-335 is covalently cross-linked (Glycyl lysine isopeptide (Lys-Gly) (interchain with G-Cter in SUMO2)). The span at 372–384 shows a compositional bias: basic and acidic residues; sequence KKRSGSPERDRPG. Residues 372–392 are disordered; sequence KKRSGSPERDRPGHVSQKYSQ. At Ser-377 the chain carries Phosphoserine. The 78-residue stretch at 400–477 folds into the RRM 3 domain; sequence LCIYIRNFPF…TEVLLRLISE (78 aa). Residues Lys-514 and Lys-541 each participate in a glycyl lysine isopeptide (Lys-Gly) (interchain with G-Cter in SUMO2) cross-link. A compositionally biased stretch (basic and acidic residues) spans 538–621; that stretch reads DNFKHPQRDF…RHPREEDWRR (84 aa). Positions 538-690 are disordered; the sequence is DNFKHPQRDF…THQMKTSGAL (153 aa). Phosphoserine occurs at positions 575 and 591. A compositionally biased stretch (polar residues) spans 627–654; it reads LQSTSGGHPQSISGGHPQSISGARPRST. The segment covering 661–672 has biased composition (low complexity); sequence SISGGRLRSISG.

The polypeptide is RNA-binding protein 12B (RBM12B) (Pongo abelii (Sumatran orangutan)).